Consider the following 270-residue polypeptide: Carboxy-S-adenosyl-L-methionine synthase (270 aa).

S-adenosyl-L-methionine-binding positions include Tyr-65, 90–92, 143–144, Asn-158, and Arg-225; these read GCS and DI.

This sequence belongs to the class I-like SAM-binding methyltransferase superfamily. Cx-SAM synthase family. Homodimer.

The catalysed reaction is prephenate + S-adenosyl-L-methionine = carboxy-S-adenosyl-L-methionine + 3-phenylpyruvate + H2O. Its function is as follows. Catalyzes the conversion of S-adenosyl-L-methionine (SAM) to carboxy-S-adenosyl-L-methionine (Cx-SAM). This chain is Carboxy-S-adenosyl-L-methionine synthase, found in Chromohalobacter salexigens (strain ATCC BAA-138 / DSM 3043 / CIP 106854 / NCIMB 13768 / 1H11).